We begin with the raw amino-acid sequence, 142 residues long: Large ribosomal subunit protein uL13 (142 aa).

It belongs to the universal ribosomal protein uL13 family. In terms of assembly, part of the 50S ribosomal subunit.

This protein is one of the early assembly proteins of the 50S ribosomal subunit, although it is not seen to bind rRNA by itself. It is important during the early stages of 50S assembly. In Geobacter sp. (strain M21), this protein is Large ribosomal subunit protein uL13.